The chain runs to 395 residues: ATP phosphoribosyltransferase regulatory subunit (395 aa).

The protein belongs to the class-II aminoacyl-tRNA synthetase family. HisZ subfamily. In terms of assembly, heteromultimer composed of HisG and HisZ subunits.

It is found in the cytoplasm. The protein operates within amino-acid biosynthesis; L-histidine biosynthesis; L-histidine from 5-phospho-alpha-D-ribose 1-diphosphate: step 1/9. Functionally, required for the first step of histidine biosynthesis. May allow the feedback regulation of ATP phosphoribosyltransferase activity by histidine. This chain is ATP phosphoribosyltransferase regulatory subunit, found in Pseudomonas putida (strain ATCC 700007 / DSM 6899 / JCM 31910 / BCRC 17059 / LMG 24140 / F1).